A 425-amino-acid chain; its full sequence is Serine--tRNA ligase (425 aa).

233-235 provides a ligand contact to L-serine; that stretch reads TAE. 264 to 266 lines the ATP pocket; that stretch reads RRE. Glu287 provides a ligand contact to L-serine. Residue 351–354 coordinates ATP; sequence EISS. Residue Ser385 participates in L-serine binding.

This sequence belongs to the class-II aminoacyl-tRNA synthetase family. Type-1 seryl-tRNA synthetase subfamily. In terms of assembly, homodimer. The tRNA molecule binds across the dimer.

The protein resides in the cytoplasm. It catalyses the reaction tRNA(Ser) + L-serine + ATP = L-seryl-tRNA(Ser) + AMP + diphosphate + H(+). It carries out the reaction tRNA(Sec) + L-serine + ATP = L-seryl-tRNA(Sec) + AMP + diphosphate + H(+). It participates in aminoacyl-tRNA biosynthesis; selenocysteinyl-tRNA(Sec) biosynthesis; L-seryl-tRNA(Sec) from L-serine and tRNA(Sec): step 1/1. Its function is as follows. Catalyzes the attachment of serine to tRNA(Ser). Is also able to aminoacylate tRNA(Sec) with serine, to form the misacylated tRNA L-seryl-tRNA(Sec), which will be further converted into selenocysteinyl-tRNA(Sec). In Prochlorococcus marinus (strain AS9601), this protein is Serine--tRNA ligase.